The chain runs to 434 residues: Serine hydroxymethyltransferase (434 aa).

Residues leucine 131 and 135-137 (GHL) each bind (6S)-5,6,7,8-tetrahydrofolate. At lysine 240 the chain carries N6-(pyridoxal phosphate)lysine.

This sequence belongs to the SHMT family. Homodimer. Pyridoxal 5'-phosphate is required as a cofactor.

It localises to the cytoplasm. It carries out the reaction (6R)-5,10-methylene-5,6,7,8-tetrahydrofolate + glycine + H2O = (6S)-5,6,7,8-tetrahydrofolate + L-serine. It functions in the pathway one-carbon metabolism; tetrahydrofolate interconversion. It participates in amino-acid biosynthesis; glycine biosynthesis; glycine from L-serine: step 1/1. Functionally, catalyzes the reversible interconversion of serine and glycine with tetrahydrofolate (THF) serving as the one-carbon carrier. This reaction serves as the major source of one-carbon groups required for the biosynthesis of purines, thymidylate, methionine, and other important biomolecules. Also exhibits THF-independent aldolase activity toward beta-hydroxyamino acids, producing glycine and aldehydes, via a retro-aldol mechanism. This Gluconobacter oxydans (strain 621H) (Gluconobacter suboxydans) protein is Serine hydroxymethyltransferase.